The sequence spans 476 residues: MRQSSDNRQNLYLYNTASRTKELFSPSNDPVKLYTCGPTVYDYAHIGNFRTYIFEDLLKRILLFFGYSVKHVMNITDVDDKTLAGACKNNISLDTYTAPFIQAFFKDVATLHILPADAYPRATHYIPQMLVAIRKLLDDGIAYIGQDHSVYFSIKEFPSYGKLSQLQLQNLQCCSRIASDEYDKENLSDFVLWKAYDKHRDGHIYWESPFGKGRPGWHLECSIMAMELLGPSIDIHAGGVDNIFPHHENEIAQSESLSHQPFSRYWLHSEHLLVDGKKMSKSLGNFFTLRNLLDRGFSGAEIRYMLLQSHYRMQLNFTEEGLMACRQALKRLRDFISRLESPYPESATISEGIDQCGQRFLQDFSNAIANDLNIAAALASLFDFIHQTNSRIDQSHFTQADSHYVLDILKKINTVLGVIPFSTSLEIPSEVARLVEEREIARKEKNWKQADVLRNQIASFGYVVEDTKSGPKVKKY.

Residue cysteine 36 participates in Zn(2+) binding. Positions proline 38–asparagine 48 match the 'HIGH' region motif. Zn(2+) is bound by residues cysteine 221, histidine 246, and glutamate 250. The short motif at lysine 278 to serine 282 is the 'KMSKS' region element. Position 281 (lysine 281) interacts with ATP.

This sequence belongs to the class-I aminoacyl-tRNA synthetase family. In terms of assembly, monomer. Requires Zn(2+) as cofactor.

The protein resides in the cytoplasm. The catalysed reaction is tRNA(Cys) + L-cysteine + ATP = L-cysteinyl-tRNA(Cys) + AMP + diphosphate. In Chlamydia abortus (strain DSM 27085 / S26/3) (Chlamydophila abortus), this protein is Cysteine--tRNA ligase.